We begin with the raw amino-acid sequence, 345 residues long: Short-wave-sensitive opsin 1 (345 aa).

Topologically, residues 1–30 (MSEEEFYLFKNISSVGPWDGPQYHIAPVWA) are extracellular. N11 carries N-linked (GlcNAc...) asparagine glycosylation. A helical membrane pass occupies residues 31–55 (FYLQAAFMGTVFLIGFPLNAMVLVA). At 56–67 (TLRYKKLRQPLN) the chain is on the cytoplasmic side. Residues 68-93 (YILVNVSFGGFLLCIFSVFPVFVASC) form a helical membrane-spanning segment. Topologically, residues 94–107 (NGYFVFGRHVCALE) are extracellular. Residues C104 and C181 are joined by a disulfide bond. The helical transmembrane segment at 108–127 (GFLGTVAGLVTGWSLAFLAF) threads the bilayer. Topologically, residues 128–146 (ERYIVICKPFGNFRFSSKH) are cytoplasmic. Residues 147–170 (ALTVVLATWTIGIGVSIPPFFGWS) traverse the membrane as a helical segment. Topologically, residues 171–196 (RFIPEGLQCSCGPDWYTVGTKYRSES) are extracellular. Residues 197–224 (YTWFLFIFCFIVPLSLICFSYTQLLRAL) traverse the membrane as a helical segment. Residues 225 to 246 (KAVAAQQQESATTQKAEREVSR) are Cytoplasmic-facing. A helical transmembrane segment spans residues 247 to 270 (MVVVMVGSFCVCYVPYAAFAMYMV). Residues 271–278 (NNRNHGLD) lie on the Extracellular side of the membrane. The helical transmembrane segment at 279-303 (LRLVTIPSFFSKSACIYNPIIYCFM) threads the bilayer. K290 is subject to N6-(retinylidene)lysine. Residues 304 to 345 (NKQFQACIMKMVCGKAMTDESDTCSSQKTEVSTVSSTQVGPN) lie on the Cytoplasmic side of the membrane.

This sequence belongs to the G-protein coupled receptor 1 family. Opsin subfamily. In terms of processing, phosphorylated on some or all of the serine and threonine residues present in the C-terminal region. As to expression, the three color pigments are found in the cone photoreceptor cells. Expressed throughout the epidermis and dermis, primarily in the stratum granulosum in the facial and abdominal skin (at protein level). Expressed in dermal fibroblasts (at protein level). Expressed in melanocytes (at protein level).

Its subcellular location is the cell membrane. The protein resides in the photoreceptor inner segment. The protein localises to the cell projection. It is found in the cilium. It localises to the photoreceptor outer segment. Its subcellular location is the cytoplasm. The protein resides in the perinuclear region. Functionally, visual pigments are the light-absorbing molecules that mediate vision. They consist of an apoprotein, opsin, covalently linked to cis-retinal. Required for the maintenance of cone outer segment organization in the ventral retina, but not essential for the maintenance of functioning cone photoreceptors. Involved in ensuring correct abundance and localization of retinal membrane proteins. May increase spectral sensitivity in dim light. The polypeptide is Short-wave-sensitive opsin 1 (OPN1SW) (Homo sapiens (Human)).